Here is a 59-residue protein sequence, read N- to C-terminus: Early growth response protein 1 (59 aa).

3 C2H2-type zinc fingers span residues 1 to 18 (CDRR…IRIH), 24 to 46 (FQCR…IRTH), and 52 to 59 (FACDICGR).

Belongs to the EGR C2H2-type zinc-finger protein family.

The protein localises to the nucleus. Its subcellular location is the cytoplasm. Transcriptional regulator. Recognizes and binds to the DNA sequence 5'-GCG(T/G)GGGCG-3'(EGR-site) in the promoter region of target genes. Binds double-stranded target DNA, irrespective of the cytosine methylation status. Regulates the transcription of numerous target genes, and thereby plays an important role in regulating the response to growth factors, DNA damage, and ischemia. Plays a role in the regulation of cell survival, proliferation and cell death. Mediates responses to ischemia and hypoxia; regulates the expression of proteins that are involved in inflammatory processes. Plays a role in regulating the expression of circadian clock genes. This is Early growth response protein 1 (EGR1) from Serinus canaria (Island canary).